The following is a 153-amino-acid chain: NADPH-dependent 7-cyano-7-deazaguanine reductase (153 aa).

Polar residues predominate over residues 1–17; sequence MTDTRNLTQLGSKTQAP. Positions 1 to 23 are disordered; it reads MTDTRNLTQLGSKTQAPASPEAA. Cys51 serves as the catalytic Thioimide intermediate. Asp58 (proton donor) is an active-site residue. Residues 73–75 and 92–93 each bind substrate; these read VES and HE.

The protein belongs to the GTP cyclohydrolase I family. QueF type 1 subfamily.

It is found in the cytoplasm. The enzyme catalyses 7-aminomethyl-7-carbaguanine + 2 NADP(+) = 7-cyano-7-deazaguanine + 2 NADPH + 3 H(+). It functions in the pathway tRNA modification; tRNA-queuosine biosynthesis. Its function is as follows. Catalyzes the NADPH-dependent reduction of 7-cyano-7-deazaguanine (preQ0) to 7-aminomethyl-7-deazaguanine (preQ1). The protein is NADPH-dependent 7-cyano-7-deazaguanine reductase of Chelativorans sp. (strain BNC1).